A 155-amino-acid polypeptide reads, in one-letter code: uncharacterized protein (155 aa).

The signal sequence occupies residues 1–23; it reads MTILSLSRFMLAGVLLASFNASA.

It to E.coli YfjT.

This is an uncharacterized protein from Escherichia coli (strain K12).